We begin with the raw amino-acid sequence, 268 residues long: Tryptophan synthase alpha chain (268 aa).

Residues E49 and D60 each act as proton acceptor in the active site.

The protein belongs to the TrpA family. As to quaternary structure, tetramer of two alpha and two beta chains.

The enzyme catalyses (1S,2R)-1-C-(indol-3-yl)glycerol 3-phosphate + L-serine = D-glyceraldehyde 3-phosphate + L-tryptophan + H2O. Its pathway is amino-acid biosynthesis; L-tryptophan biosynthesis; L-tryptophan from chorismate: step 5/5. The alpha subunit is responsible for the aldol cleavage of indoleglycerol phosphate to indole and glyceraldehyde 3-phosphate. This chain is Tryptophan synthase alpha chain, found in Shigella boydii serotype 4 (strain Sb227).